Reading from the N-terminus, the 51-residue chain is Cytochrome bd ubiquinol oxidase subunit X (51 aa).

Residues 1 to 3 are Cytoplasmic-facing; the sequence is MWY. The chain crosses the membrane as a helical span at residues 4 to 26; sequence FSWLLGLPLAAAFAVLNAMWYEL. The Periplasmic segment spans residues 27–51; that stretch reads MDDRARKRLAADPTAELALEGNKHH.

The protein belongs to the cytochrome ubiquinol oxidase subunit X family. In terms of assembly, may be a subunit of cytochrome ubiquinol oxidase.

The protein resides in the cell inner membrane. It catalyses the reaction 2 a ubiquinol + O2(in) + 4 H(+)(in) = 2 a ubiquinone + 2 H2O(in) + 4 H(+)(out). The protein operates within energy metabolism; oxidative phosphorylation. In terms of biological role, required for correct functioning of cytochrome bd oxidase. The polypeptide is Cytochrome bd ubiquinol oxidase subunit X (cydX) (Brucella abortus (strain 2308)).